Reading from the N-terminus, the 253-residue chain is DNA repair protein RecO (253 aa).

Belongs to the RecO family.

Its function is as follows. Involved in DNA repair and RecF pathway recombination. The sequence is that of DNA repair protein RecO from Streptococcus agalactiae serotype III (strain NEM316).